We begin with the raw amino-acid sequence, 298 residues long: Glycine--tRNA ligase alpha subunit (298 aa).

Belongs to the class-II aminoacyl-tRNA synthetase family. As to quaternary structure, tetramer of two alpha and two beta subunits.

It localises to the cytoplasm. The enzyme catalyses tRNA(Gly) + glycine + ATP = glycyl-tRNA(Gly) + AMP + diphosphate. The polypeptide is Glycine--tRNA ligase alpha subunit (Helicobacter acinonychis (strain Sheeba)).